The primary structure comprises 367 residues: Protein RecA (367 aa).

An ATP-binding site is contributed by 73–80 (GPESSGKT). Positions 345 to 367 (DEPVAKKASAKESKEAKELKEVE) are disordered.

The protein belongs to the RecA family.

It localises to the cytoplasm. Its function is as follows. Can catalyze the hydrolysis of ATP in the presence of single-stranded DNA, the ATP-dependent uptake of single-stranded DNA by duplex DNA, and the ATP-dependent hybridization of homologous single-stranded DNAs. It interacts with LexA causing its activation and leading to its autocatalytic cleavage. This chain is Protein RecA, found in Herminiimonas arsenicoxydans.